The chain runs to 512 residues: Cytochrome P450 monooxygenase gliC (512 aa).

The signal sequence occupies residues 1–19 (MAFTLTILVPCMVLALVAA). Residues Asn-118, Asn-421, and Asn-434 are each glycosylated (N-linked (GlcNAc...) asparagine). Cys-452 contributes to the heme binding site.

The protein belongs to the cytochrome P450 family. Heme is required as a cofactor.

Its pathway is mycotoxin biosynthesis. In terms of biological role, cytochrome P450 monooxygenase; part of the gene cluster that mediates the biosynthesis of gliotoxin, a member of the epipolythiodioxopiperazine (ETP) class of toxins characterized by a disulfide bridged cyclic dipeptide. The first step in gliotoxin biosynthesis is the condensation of serine and phenylalanine to form the cyclo-L-phenylalanyl-L-serine diketopiperazine (DKP) by the NRPS gliP. GliP is also able to produce the DKP cyclo-L-tryptophanyl-L-serine, suggesting that the substrate specificity of the first adenylation (A) domain in gliP is sufficiently relaxed to accommodate both L-Phe and L-Trp. The cytochrome P450 monooxygenase gliC has been shown to catalyze the subsequent hydroxylation of the alpha-carbon of L-Phe in cyclo-L-phenylalanyl-L-serine whereas the second cytochrome P450 enzyme, gliF, is presumably involved in the modification of the DKP side chain. The glutathione S-transferase (GST) gliG then forms a bis-glutathionylated biosynthetic intermediate which is responsible for the sulfurization of gliotoxin. This bis-glutathionylated intermediate is subsequently processed by the gamma-glutamyl cyclotransferase gliK to remove both gamma-glutamyl moieties. Subsequent processing via gliI yields a biosynthetic intermediate, which is N-methylated via the N-methyltransferase gliN, before the gliotoxin oxidoreductase gliT-mediated disulfide bridge closure. GliN-mediated amide methylation confers stability to ETP, damping the spontaneous formation of tri- and tetrasulfides. Intracellular dithiol gliotoxin oxidized by gliT is subsequently effluxed by gliA. Gliotoxin contributes to pathogenesis during invasive aspergillosis. In macrophages and neutrophils, gliotoxin showed inhibition of various different cell functions including cytokine production, antigen presentation, phagocytosis, and production of reactive oxygen species. The chain is Cytochrome P450 monooxygenase gliC from Aspergillus fumigatus (strain ATCC MYA-4609 / CBS 101355 / FGSC A1100 / Af293) (Neosartorya fumigata).